Consider the following 289-residue polypeptide: MTFCLLPAFTQAFCGCIFINPLTMSATLSRMDCCVGLPHCMGWLPSPVGAVAFVMEGALPIPWSYYLNSYDKHVLQQLDCLCLFPVTCYQSFTSYVTGDEVWSLHCHCGRQGSLQVGPRRLQCLAAAKVRELVVQKFLLGTRFNEYYPQYRVHANRYVNPGLEYVGSVWCGKHFIYVRADGAEFARLKGLRARLGQGVLFCESLLSCYVVIVCQQCACPPTDAQVDHCMRLLSFTLRRWQNLLLGRSGSSPLIPGFDIPRNRTERLRQRMLHRFYSYRTPIYRLTYLRG.

This sequence belongs to the adenoviridae E4 30 to 34 kDa protein family. In terms of assembly, interacts with E1B-55k.

Its subcellular location is the host nucleus. The protein localises to the host cytoplasm. Its function is as follows. Plays a major role to prevent cellular inhibition of viral genome replication by nuclear bodies. Assembles an SCF-like E3 ubiquitin ligase complex based on the cellular proteins ELOB, ELOC, CUL5 and RBX1, in cooperation with viral E1B-55K. This viral RING-type ligase ubiquitinates cellular substrates prior to proteasomal degradation: p53/TP53, LIG4, MRE11-RAD50-NBS1 (MRN) complex, ITGA3, DAXX and BLM. The sequence is that of Probable early E4 33 kDa protein from Mus musculus (Mouse).